The chain runs to 163 residues: uncharacterized protein (163 aa).

The N-acetyltransferase domain occupies 7–162; that stretch reads ISISAVKLPQ…NVVYMRLEMS (156 aa).

Belongs to the acetyltransferase family.

It is found in the cytoplasm. It localises to the nucleus. This is an uncharacterized protein from Schizosaccharomyces pombe (strain 972 / ATCC 24843) (Fission yeast).